The primary structure comprises 298 residues: N-acetylmuramic acid 6-phosphate etherase (298 aa).

One can recognise an SIS domain in the interval 55-218 (IHAQVSGGGR…STGLMIKSGK (164 aa)). E83 functions as the Proton donor in the catalytic mechanism. E114 is a catalytic residue.

It belongs to the GCKR-like family. MurNAc-6-P etherase subfamily. In terms of assembly, homodimer.

The catalysed reaction is N-acetyl-D-muramate 6-phosphate + H2O = N-acetyl-D-glucosamine 6-phosphate + (R)-lactate. It functions in the pathway amino-sugar metabolism; 1,6-anhydro-N-acetylmuramate degradation. Its pathway is amino-sugar metabolism; N-acetylmuramate degradation. It participates in cell wall biogenesis; peptidoglycan recycling. Functionally, specifically catalyzes the cleavage of the D-lactyl ether substituent of MurNAc 6-phosphate, producing GlcNAc 6-phosphate and D-lactate. Together with AnmK, is also required for the utilization of anhydro-N-acetylmuramic acid (anhMurNAc) either imported from the medium or derived from its own cell wall murein, and thus plays a role in cell wall recycling. This Escherichia fergusonii (strain ATCC 35469 / DSM 13698 / CCUG 18766 / IAM 14443 / JCM 21226 / LMG 7866 / NBRC 102419 / NCTC 12128 / CDC 0568-73) protein is N-acetylmuramic acid 6-phosphate etherase.